The chain runs to 95 residues: Putative small ubiquitin-related modifier 7 (95 aa).

Positions 13–90 (SHITIKIKSQ…IDAFVDQIAG (78 aa)) constitute a Ubiquitin-like domain. Gly-90 participates in a covalent cross-link: Glycyl lysine isopeptide (Gly-Lys) (interchain with K-? in acceptor proteins).

The protein belongs to the ubiquitin family. SUMO subfamily. As to quaternary structure, interacts with SAE2, SCE1, SIZ1 and MMS21 Covalently attached to a number of proteins.

It localises to the nucleus. The protein resides in the cytoplasm. Ubiquitin-like protein which can be covalently attached to target lysines as a monomer. Does not seem to be involved in protein degradation and may function as an antagonist of ubiquitin in the degradation process. The sequence is that of Putative small ubiquitin-related modifier 7 (SUMO7) from Arabidopsis thaliana (Mouse-ear cress).